Here is a 62-residue protein sequence, read N- to C-terminus: Protein DsrB (62 aa).

Belongs to the DsrB family.

This is Protein DsrB from Citrobacter koseri (strain ATCC BAA-895 / CDC 4225-83 / SGSC4696).